Reading from the N-terminus, the 290-residue chain is Bifunctional protein FolD (290 aa).

Residues 169 to 171, isoleucine 194, and isoleucine 235 contribute to the NADP(+) site; that span reads GAS.

It belongs to the tetrahydrofolate dehydrogenase/cyclohydrolase family. Homodimer.

The catalysed reaction is (6R)-5,10-methylene-5,6,7,8-tetrahydrofolate + NADP(+) = (6R)-5,10-methenyltetrahydrofolate + NADPH. The enzyme catalyses (6R)-5,10-methenyltetrahydrofolate + H2O = (6R)-10-formyltetrahydrofolate + H(+). Its pathway is one-carbon metabolism; tetrahydrofolate interconversion. Catalyzes the oxidation of 5,10-methylenetetrahydrofolate to 5,10-methenyltetrahydrofolate and then the hydrolysis of 5,10-methenyltetrahydrofolate to 10-formyltetrahydrofolate. This is Bifunctional protein FolD from Helicobacter pylori (strain J99 / ATCC 700824) (Campylobacter pylori J99).